Here is a 55-residue protein sequence, read N- to C-terminus: Accessory gland-specific peptide 70A (55 aa).

A signal peptide spans 1-19 (MKTLSVFLVLVCLLGLVQS). Hydroxyproline is present on residues P28, P32, P34, and P38. The cysteines at positions 43 and 55 are disulfide-linked.

As to expression, main cells of the accessory glands of males (paragonial gland).

The protein resides in the secreted. Its function is as follows. Represses female sexual receptivity and stimulates oviposition. The sequence is that of Accessory gland-specific peptide 70A (Acp70A) from Drosophila sechellia (Fruit fly).